The following is a 124-amino-acid chain: MHSKLNIQSKQLYKIFLLIVGSILGAILRWKLNNYFWVNISGAALLGLIVGLRAGSRIQFFLVIGFCGSFTTFSGWILDVFDLFRTGFFWKAAGLICSNLLGGFTALSVTFWIGRKIRHLFIPQ.

4 helical membrane-spanning segments follow: residues 7–27 (IQSKQLYKIFLLIVGSILGAI), 32–52 (LNNYFWVNISGAALLGLIVGL), 58–78 (IQFFLVIGFCGSFTTFSGWIL), and 93–113 (AGLICSNLLGGFTALSVTFWI). Residues Gly68 and Thr71 each contribute to the Na(+) site.

This sequence belongs to the fluoride channel Fluc/FEX (TC 1.A.43) family.

The protein localises to the cell inner membrane. It carries out the reaction fluoride(in) = fluoride(out). With respect to regulation, na(+) is not transported, but it plays an essential structural role and its presence is essential for fluoride channel function. Its function is as follows. Fluoride-specific ion channel. Important for reducing fluoride concentration in the cell, thus reducing its toxicity. The polypeptide is Fluoride-specific ion channel FluC 1 (Prochlorococcus marinus (strain SARG / CCMP1375 / SS120)).